Reading from the N-terminus, the 500-residue chain is Adenylosuccinate synthetase, chloroplastic (500 aa).

Residues 87–93 (GDEGKGK) and 115–117 (GHT) each bind GTP. The active-site Proton acceptor is the aspartate 88. 2 residues coordinate Mg(2+): aspartate 88 and glycine 115. Residues 88-91 (DEGK), 113-116 (NAGH), threonine 205, arginine 219, glutamine 299, threonine 314, and arginine 378 contribute to the IMP site. Catalysis depends on histidine 116, which acts as the Proton donor. 374–380 (TTTGRPR) provides a ligand contact to substrate. GTP is bound by residues arginine 380, 406-408 (KLD), and 489-491 (GIG).

It belongs to the adenylosuccinate synthetase family. Homodimer. It depends on Mg(2+) as a cofactor.

The protein localises to the plastid. Its subcellular location is the chloroplast. It carries out the reaction IMP + L-aspartate + GTP = N(6)-(1,2-dicarboxyethyl)-AMP + GDP + phosphate + 2 H(+). It participates in purine metabolism; AMP biosynthesis via de novo pathway; AMP from IMP: step 1/2. In terms of biological role, plays an important role in the de novo pathway and in the salvage pathway of purine nucleotide biosynthesis. Catalyzes the first committed step in the biosynthesis of AMP from IMP. This Solanum bulbocastanum (Wild potato) protein is Adenylosuccinate synthetase, chloroplastic.